Here is a 485-residue protein sequence, read N- to C-terminus: Bifunctional protein GlmU (485 aa).

Residues 1 to 241 form a pyrophosphorylase region; it reads MSASDFSSAV…ARELAGVNDR (241 aa). UDP-N-acetyl-alpha-D-glucosamine contacts are provided by residues 13–16, Lys27, Gln84, and 89–90; these read LAAG and GT. Asp114 contacts Mg(2+). Residues Gly151, Glu166, Asn181, and Asn239 each coordinate UDP-N-acetyl-alpha-D-glucosamine. Residue Asn239 participates in Mg(2+) binding. The tract at residues 242-262 is linker; sequence VQLAEAGAELNRRTVIAAMRG. The N-acetyltransferase stretch occupies residues 263-485; the sequence is GATIVDPATT…AAQNVHNQEG (223 aa). Positions 344 and 362 each coordinate UDP-N-acetyl-alpha-D-glucosamine. His374 (proton acceptor) is an active-site residue. UDP-N-acetyl-alpha-D-glucosamine-binding residues include Tyr377 and Asn388. Acetyl-CoA contacts are provided by residues Ala391, 397–398, Ser416, and Ala434; that span reads NY. The disordered stretch occupies residues 465 to 485; the sequence is RPGTAAAQAAEAAQNVHNQEG. Low complexity predominate over residues 469-478; that stretch reads AAAQAAEAAQ.

This sequence in the N-terminal section; belongs to the N-acetylglucosamine-1-phosphate uridyltransferase family. It in the C-terminal section; belongs to the transferase hexapeptide repeat family. In terms of assembly, homotrimer. Mg(2+) is required as a cofactor.

The protein localises to the cytoplasm. The catalysed reaction is alpha-D-glucosamine 1-phosphate + acetyl-CoA = N-acetyl-alpha-D-glucosamine 1-phosphate + CoA + H(+). It catalyses the reaction N-acetyl-alpha-D-glucosamine 1-phosphate + UTP + H(+) = UDP-N-acetyl-alpha-D-glucosamine + diphosphate. It functions in the pathway nucleotide-sugar biosynthesis; UDP-N-acetyl-alpha-D-glucosamine biosynthesis; N-acetyl-alpha-D-glucosamine 1-phosphate from alpha-D-glucosamine 6-phosphate (route II): step 2/2. Its pathway is nucleotide-sugar biosynthesis; UDP-N-acetyl-alpha-D-glucosamine biosynthesis; UDP-N-acetyl-alpha-D-glucosamine from N-acetyl-alpha-D-glucosamine 1-phosphate: step 1/1. The protein operates within bacterial outer membrane biogenesis; LPS lipid A biosynthesis. Its function is as follows. Catalyzes the last two sequential reactions in the de novo biosynthetic pathway for UDP-N-acetylglucosamine (UDP-GlcNAc). The C-terminal domain catalyzes the transfer of acetyl group from acetyl coenzyme A to glucosamine-1-phosphate (GlcN-1-P) to produce N-acetylglucosamine-1-phosphate (GlcNAc-1-P), which is converted into UDP-GlcNAc by the transfer of uridine 5-monophosphate (from uridine 5-triphosphate), a reaction catalyzed by the N-terminal domain. This chain is Bifunctional protein GlmU, found in Corynebacterium glutamicum (strain R).